Consider the following 80-residue polypeptide: Cytochrome c oxidase subunit 7A1, mitochondrial (80 aa).

A mitochondrion-targeting transit peptide spans 1–21 (MRALRVSQALVRSFSSSTRSH). Residues 22 to 46 (LENRVAEKQKLFQADNDLPVHLKGG) lie on the Mitochondrial matrix side of the membrane. A helical transmembrane segment spans residues 47–75 (GMDNVLYRLTMTLTLGGTAYCLYCLGWAS). Topologically, residues 76–80 (FPHKK) are mitochondrial intermembrane.

It belongs to the cytochrome c oxidase VIIa family. In terms of assembly, component of the complex IV (CIV, cytochrome c oxidase), a multisubunit enzyme composed of 14 subunits. The complex is composed of a catalytic core of 3 subunits MT-CO1, MT-CO2 and MT-CO3, encoded in the mitochondrial DNA, and 11 supernumerary subunits COX4I, COX5A, COX5B, COX6A, COX6B, COX6C, COX7A, COX7B, COX7C, COX8 and NDUFA4, which are encoded in the nuclear genome. The complex exists as a monomer or a dimer and forms supercomplexes (SCs) in the inner mitochondrial membrane with NADH-ubiquinone oxidoreductase (complex I, CI) and ubiquinol-cytochrome c oxidoreductase (cytochrome b-c1 complex, complex III, CIII), resulting in different assemblies (supercomplex SCI(1)III(2)IV(1) and megacomplex MCI(2)III(2)IV(2)).

It is found in the mitochondrion inner membrane. Its pathway is energy metabolism; oxidative phosphorylation. In terms of biological role, component of the mitochondrial respiratory complex IV (CIV, also named cytochrome c oxidase complex), the last enzyme in the mitochondrial electron transport chain which drives oxidative phosphorylation. The CIV complex is the component of the respiratory chain that catalyzes the reduction of oxygen to water. Acts as an assembly factor that specifically drives the homodimerization of CIV complexes, mediating the formation of mitochondrial respiratory supercomplexes (respirasomes) containing two CIV: supercomplxes with two molecules of CIV show improved activity. Despite being highly expressed in brown adipose tissue, not required for thermogenesis. This chain is Cytochrome c oxidase subunit 7A1, mitochondrial, found in Mus musculus (Mouse).